The chain runs to 198 residues: Autophagy-related protein 33 (198 aa).

Helical transmembrane passes span 17 to 37 (VSLG…LPAL), 60 to 80 (PVLA…FLAP), and 86 to 106 (PYLL…ILIP). The disordered stretch occupies residues 111–147 (APRRTASSAPRKSSRAKMEASYEVLGDAHSEPASDED). The segment covering 112–121 (PRRTASSAPR) has biased composition (low complexity). Residues 126–142 (AKMEASYEVLGDAHSEP) show a composition bias toward basic and acidic residues. The chain crosses the membrane as a helical span at residues 171 to 191 (TAISALGFAMAVVGIWGDGAP).

The protein belongs to the ATG33 family.

The protein resides in the mitochondrion membrane. In terms of biological role, involved in the selective degradation of mitochondria via autophagy during starvation and at post-log phase. Autophagy is required for proper vegetative growth, asexual/sexual reproduction, and full virulence. Autophagy is particularly involved in the biosynthesis of deoxynivalenol (DON), an important virulence determinant. The sequence is that of Autophagy-related protein 33 from Gibberella zeae (strain ATCC MYA-4620 / CBS 123657 / FGSC 9075 / NRRL 31084 / PH-1) (Wheat head blight fungus).